Reading from the N-terminus, the 770-residue chain is Proprotein convertase subtilisin/kexin type 7 (770 aa).

The first 36 residues, 1–36 (MPKGRQKVPHLDAHLGLPICLWLELAIFFLVPQVMG), serve as a signal peptide directing secretion. The propeptide occupies 37-140 (LSEAGGLDIL…EQTLLKRAKR (104 aa)). Topologically, residues 141–666 (SIHFNDPKYP…YTITPNTLKT (526 aa)) are extracellular. One can recognise a Peptidase S8 domain in the interval 152–472 (QWHLNNRRSP…FGLLNAWRLV (321 aa)). N-linked (GlcNAc...) asparagine glycans are attached at residues asparagine 166 and asparagine 174. Catalysis depends on aspartate 186, which acts as the Charge relay system. A disordered region spans residues 195-228 (DIAPNYSPEGSYDLNSNDPDPMPHPDEENGNHHG). Basic and acidic residues predominate over residues 215 to 225 (PMPHPDEENGN). Catalysis depends on histidine 227, which acts as the Charge relay system. An N-linked (GlcNAc...) asparagine glycan is attached at asparagine 240. Serine 405 acts as the Charge relay system in catalysis. The 138-residue stretch at 480-617 (SVPYLASYVS…QLTLYGSMWS (138 aa)) folds into the P/Homo B domain. Asparagine 510 carries N-linked (GlcNAc...) asparagine glycosylation. The chain crosses the membrane as a helical span at residues 667 to 687 (LVLVGCFSVFWTIYYMLEVCL). The Cytoplasmic portion of the chain corresponds to 688–770 (SQRNKASTHG…LLQGKSGQIC (83 aa)).

It belongs to the peptidase S8 family. Ca(2+) serves as cofactor. In terms of tissue distribution, widely expressed. Expressed in brain, lung, muscle, heart, liver, kidney, spleen and thymus.

The protein localises to the golgi apparatus. Its subcellular location is the trans-Golgi network membrane. Inhibited by zinc and copper. In terms of biological role, serine endoprotease that processes various proproteins by cleavage at paired basic amino acids, recognizing the RXXX[KR]R consensus motif. Likely functions in the constitutive secretory pathway. This is Proprotein convertase subtilisin/kexin type 7 (Pcsk7) from Mus musculus (Mouse).